A 67-amino-acid polypeptide reads, in one-letter code: Myrmicitoxin(1)-Pm6a (67 aa).

A signal peptide spans 1-25; it reads MRSLYLSFSLTIIFVLVIMHAEAKA. Residues 26–37 constitute a propeptide that is removed on maturation; it reads ISEPNAIAEADP. At Val66 the chain carries Valine amide.

This sequence belongs to the formicidae venom clade 3 family. In terms of tissue distribution, expressed by the venom gland.

It localises to the secreted. Toxin that causes a rapid and irreversible paralysis when intrathoracically injected into insects (blowflies). Does not cause spontaneous nocifensive behaviors by intraplantar injection in mice. Exhibits hemolytic and cytotoxic activities on HEK293 cells. The sequence is that of Myrmicitoxin(1)-Pm6a from Pogonomyrmex maricopa (Maricopa harvester ant).